The primary structure comprises 318 residues: Probable cell division protein WhiA (318 aa).

The segment at residues 276 to 310 (TLQELGEMVESGSISKSGINHRLRKIDQIADKIRN) is a DNA-binding region (H-T-H motif).

This sequence belongs to the WhiA family.

Functionally, involved in cell division and chromosome segregation. This chain is Probable cell division protein WhiA, found in Exiguobacterium sibiricum (strain DSM 17290 / CCUG 55495 / CIP 109462 / JCM 13490 / 255-15).